The following is a 297-amino-acid chain: Glycerol-3-phosphate dehydrogenase [NAD(P)+] (297 aa).

NADPH-binding residues include W11, R33, and K79. The sn-glycerol 3-phosphate site is built by K79, G107, and S109. A111 lines the NADPH pocket. Sn-glycerol 3-phosphate contacts are provided by K161, D214, S224, R225, and N226. K161 serves as the catalytic Proton acceptor. R225 provides a ligand contact to NADPH. The NADPH site is built by V249 and E251.

This sequence belongs to the NAD-dependent glycerol-3-phosphate dehydrogenase family.

Its subcellular location is the cytoplasm. The catalysed reaction is sn-glycerol 3-phosphate + NAD(+) = dihydroxyacetone phosphate + NADH + H(+). The enzyme catalyses sn-glycerol 3-phosphate + NADP(+) = dihydroxyacetone phosphate + NADPH + H(+). It participates in membrane lipid metabolism; glycerophospholipid metabolism. Catalyzes the reduction of the glycolytic intermediate dihydroxyacetone phosphate (DHAP) to sn-glycerol 3-phosphate (G3P), the key precursor for phospholipid synthesis. This chain is Glycerol-3-phosphate dehydrogenase [NAD(P)+], found in Campylobacter jejuni subsp. jejuni serotype O:2 (strain ATCC 700819 / NCTC 11168).